Consider the following 147-residue polypeptide: D-aminoacyl-tRNA deacylase (147 aa).

Residues 136 to 137 (GP) carry the Gly-cisPro motif, important for rejection of L-amino acids motif.

It belongs to the DTD family. Homodimer.

It localises to the cytoplasm. The catalysed reaction is glycyl-tRNA(Ala) + H2O = tRNA(Ala) + glycine + H(+). It catalyses the reaction a D-aminoacyl-tRNA + H2O = a tRNA + a D-alpha-amino acid + H(+). An aminoacyl-tRNA editing enzyme that deacylates mischarged D-aminoacyl-tRNAs. Also deacylates mischarged glycyl-tRNA(Ala), protecting cells against glycine mischarging by AlaRS. Acts via tRNA-based rather than protein-based catalysis; rejects L-amino acids rather than detecting D-amino acids in the active site. By recycling D-aminoacyl-tRNA to D-amino acids and free tRNA molecules, this enzyme counteracts the toxicity associated with the formation of D-aminoacyl-tRNA entities in vivo and helps enforce protein L-homochirality. The chain is D-aminoacyl-tRNA deacylase from Streptococcus agalactiae serotype Ia (strain ATCC 27591 / A909 / CDC SS700).